A 361-amino-acid polypeptide reads, in one-letter code: Phospho-N-acetylmuramoyl-pentapeptide-transferase (361 aa).

Helical transmembrane passes span 21–41 (YITF…FVIG), 72–92 (TPTM…LLWV), 94–114 (LANV…LIGF), 135–155 (LAWT…VTPH), 169–189 (LLVN…VGAS), 200–220 (GLAI…AYLS), 240–260 (LAVF…FNAP), 263–283 (MVFM…AVSV), 289–309 (LVLA…MVQV), and 338–358 (TVVI…LSTL).

Belongs to the glycosyltransferase 4 family. MraY subfamily. The cofactor is Mg(2+).

Its subcellular location is the cell inner membrane. The enzyme catalyses UDP-N-acetyl-alpha-D-muramoyl-L-alanyl-gamma-D-glutamyl-meso-2,6-diaminopimeloyl-D-alanyl-D-alanine + di-trans,octa-cis-undecaprenyl phosphate = di-trans,octa-cis-undecaprenyl diphospho-N-acetyl-alpha-D-muramoyl-L-alanyl-D-glutamyl-meso-2,6-diaminopimeloyl-D-alanyl-D-alanine + UMP. The protein operates within cell wall biogenesis; peptidoglycan biosynthesis. Catalyzes the initial step of the lipid cycle reactions in the biosynthesis of the cell wall peptidoglycan: transfers peptidoglycan precursor phospho-MurNAc-pentapeptide from UDP-MurNAc-pentapeptide onto the lipid carrier undecaprenyl phosphate, yielding undecaprenyl-pyrophosphoryl-MurNAc-pentapeptide, known as lipid I. The protein is Phospho-N-acetylmuramoyl-pentapeptide-transferase of Rhodospirillum centenum (strain ATCC 51521 / SW).